The sequence spans 976 residues: Chitin synthase 3A (976 aa).

The tract at residues 29–72 (DDANASNRSPVSNPYEPDYDQLSPPPMLGAQRPVPEQNESSRDL) is disordered. Residues 31 to 40 (ANASNRSPVS) show a composition bias toward polar residues. 4 N-linked (GlcNAc...) asparagine glycosylation sites follow: N32, N66, N95, and N602. 7 consecutive transmembrane segments (helical) span residues 639-659 (LLNV…TTII), 684-704 (IVNV…FVLA), 717-737 (VLSF…TGYL), 773-793 (LIII…FLYL), 801-821 (SFPQ…VYAF), 903-923 (TGLV…VTTD), and 944-964 (FLLY…LWFI).

This sequence belongs to the chitin synthase family. Class III subfamily.

It is found in the cell membrane. The enzyme catalyses [(1-&gt;4)-N-acetyl-beta-D-glucosaminyl](n) + UDP-N-acetyl-alpha-D-glucosamine = [(1-&gt;4)-N-acetyl-beta-D-glucosaminyl](n+1) + UDP + H(+). In terms of biological role, polymerizes chitin, a structural polymer of the cell wall and septum, by transferring the sugar moiety of UDP-GlcNAc to the non-reducing end of the growing chitin polymer. Shows additive effects in septum formation with CHS1, CHS2, CHS4, CHS5, CHS6 and CHS7. Involved in virulence and mediates mycotoxin deoxinivalenol (DON) biosynthesis via the regulation of the expression of TRI4, TRI5 and TRI6. The polypeptide is Chitin synthase 3A (Gibberella zeae (strain ATCC MYA-4620 / CBS 123657 / FGSC 9075 / NRRL 31084 / PH-1) (Wheat head blight fungus)).